The sequence spans 220 residues: Probable GTP-binding protein EngB (220 aa).

Residues 23 to 199 (SVREVAFAGR…ERVLASWLDI (177 aa)) enclose the EngB-type G domain. Serine 38 and threonine 60 together coordinate Mg(2+).

It belongs to the TRAFAC class TrmE-Era-EngA-EngB-Septin-like GTPase superfamily. EngB GTPase family. Mg(2+) is required as a cofactor.

Necessary for normal cell division and for the maintenance of normal septation. The sequence is that of Probable GTP-binding protein EngB from Dechloromonas aromatica (strain RCB).